Here is a 237-residue protein sequence, read N- to C-terminus: Ribonuclease 3 (237 aa).

An RNase III domain is found at 4–133; the sequence is LTELENSLGV…VLAAIYIDKG (130 aa). Glu46 is a Mg(2+) binding site. Active-site residues include Asp50 and Glu122. Glu122 lines the Mg(2+) pocket. The DRBM domain occupies 160–229; the sequence is DYKSRLQELI…AKVALQQFEN (70 aa).

It belongs to the ribonuclease III family. As to quaternary structure, homodimer. It depends on Mg(2+) as a cofactor.

It is found in the cytoplasm. The enzyme catalyses Endonucleolytic cleavage to 5'-phosphomonoester.. Functionally, digests double-stranded RNA. Involved in the processing of primary rRNA transcript to yield the immediate precursors to the large and small rRNAs (23S and 16S). Processes some mRNAs, and tRNAs when they are encoded in the rRNA operon. Processes pre-crRNA and tracrRNA of type II CRISPR loci if present in the organism. This chain is Ribonuclease 3, found in Dehalococcoides mccartyi (strain CBDB1).